A 70-amino-acid chain; its full sequence is Protein SlyX homolog (70 aa).

It belongs to the SlyX family.

The protein is Protein SlyX homolog of Shewanella frigidimarina (strain NCIMB 400).